Consider the following 293-residue polypeptide: Glycine betaine-binding protein OpuAC (293 aa).

Positions 1-20 (MLKKIIGIGVSAMLALSLAA) are cleaved as a signal peptide. Cys-21 carries N-palmitoyl cysteine lipidation. A lipid anchor (S-diacylglycerol cysteine) is attached at Cys-21.

In terms of assembly, the complex is composed of two ATP-binding proteins (OpuAA), two transmembrane proteins (OpuAB) and a solute-binding protein (OpuAC). Interacts with FloT.

The protein resides in the cell membrane. It localises to the membrane raft. Its function is as follows. Involved in a multicomponent binding-protein-dependent transport system for glycine betaine. This is Glycine betaine-binding protein OpuAC (opuAC) from Bacillus subtilis (strain 168).